The following is an 821-amino-acid chain: Kinetochore protein SLK19 (821 aa).

2 disordered regions span residues 1–52 and 99–153; these read MNEV…SQFV and FDDK…NDKE. T7 is subject to Phosphothreonine; by CDC28. The span at 15–51 shows a compositional bias: polar residues; sequence QAQQREQNSENCSQERNPRTFNSEPDSSFNSPGSSQF. Composition is skewed to basic and acidic residues over residues 99–122 and 136–153; these read FDDK…DKHV and SSEK…NDKE. Residues S188 and S189 each carry the phosphoserine modification. Position 201 is a phosphoserine; by CDC28 (S201). S216 carries the phosphoserine modification. The residue at position 273 (T273) is a Phosphothreonine. Disordered regions lie at residues 274–298 and 699–720; these read PLYE…DDNQ and EQNN…RDDE. S283 is subject to Phosphoserine. A coiled-coil region spans residues 310–821; the sequence is AKRNEELTDQ…LLKLLENEKK (512 aa).

Cleaved by ESP1 at the onset of anaphase. Post-translationally, phosphorylated by CDC5/Polo-like kinase at the onset of anaphase. Phosphorylation takes places at proximity to cleavage sites and is required for an efficient cleavage by ESP1. Phosphorylated also by CDC28.

The protein resides in the chromosome. It localises to the centromere. It is found in the kinetochore. The protein localises to the cytoplasm. Its subcellular location is the cytoskeleton. The protein resides in the microtubule organizing center. It localises to the spindle pole body. Functionally, has a role in spindle assembly and stability. Required to ensure a timely exit form mitosis. Essential to maintain pre-anaphase spindle polarity. Associates to the plus ends of the microtubules at the kinetochore and spindle midzone. A component of the FEAR (CDC14 Early Anaphase Release) network which promotes CDC14 release from the nucleolus during early anaphase. Required for proper chromosome segregation during meiosis I where it prevents premature sister chromatid separation. This chain is Kinetochore protein SLK19 (SLK19), found in Saccharomyces cerevisiae (strain ATCC 204508 / S288c) (Baker's yeast).